We begin with the raw amino-acid sequence, 699 residues long: Transketolase (699 aa).

Residue histidine 45 participates in substrate binding. Residues threonine 48, histidine 85, and 133-135 each bind thiamine diphosphate; that span reads GPL. A Mg(2+)-binding site is contributed by aspartate 177. Residues glycine 178 and asparagine 207 each coordinate thiamine diphosphate. The Mg(2+) site is built by asparagine 207 and isoleucine 209. Substrate is bound by residues histidine 283, arginine 378, and serine 405. Histidine 283 contacts thiamine diphosphate. The active-site Proton donor is the glutamate 441. Phenylalanine 467 lines the thiamine diphosphate pocket. Substrate contacts are provided by histidine 491, aspartate 499, and arginine 552.

It belongs to the transketolase family. Homodimer. Mg(2+) serves as cofactor. The cofactor is Ca(2+). Mn(2+) is required as a cofactor. Requires Co(2+) as cofactor. It depends on thiamine diphosphate as a cofactor.

It catalyses the reaction D-sedoheptulose 7-phosphate + D-glyceraldehyde 3-phosphate = aldehydo-D-ribose 5-phosphate + D-xylulose 5-phosphate. Catalyzes the transfer of a two-carbon ketol group from a ketose donor to an aldose acceptor, via a covalent intermediate with the cofactor thiamine pyrophosphate. The chain is Transketolase (tkt) from Mycobacterium leprae (strain TN).